A 904-amino-acid polypeptide reads, in one-letter code: Protein translocase subunit SecA (904 aa).

Residues glutamine 89, 107–111 (GEGKT), and aspartate 502 contribute to the ATP site. The interval 872–892 (VESDPTTWGEPSRNDPCPCGS) is disordered. Zn(2+) contacts are provided by cysteine 888, cysteine 890, cysteine 899, and histidine 900.

Belongs to the SecA family. In terms of assembly, part of the essential protein translocation apparatus which comprises SecA, SecYEG and auxiliary proteins SecDF-YajC and YidC. Homodimer. It depends on Zn(2+) as a cofactor.

The protein resides in the cell inner membrane. It localises to the cytoplasm. The enzyme catalyses ATP + H2O + cellular proteinSide 1 = ADP + phosphate + cellular proteinSide 2.. Functionally, part of the Sec protein translocase complex. Interacts with the SecYEG preprotein conducting channel. Has a central role in coupling the hydrolysis of ATP to the transfer of proteins into and across the cell membrane, serving both as a receptor for the preprotein-SecB complex and as an ATP-driven molecular motor driving the stepwise translocation of polypeptide chains across the membrane. This Rhodobacter capsulatus (Rhodopseudomonas capsulata) protein is Protein translocase subunit SecA.